Reading from the N-terminus, the 634-residue chain is Glutathione S-transferase C-terminal domain-containing protein (634 aa).

Residues 131–333 (LGFKKTCLKA…QEVPKVKTAA (203 aa)) enclose the GST C-terminal domain. A disordered region spans residues 189–233 (RVHNDDKLRRQKLKQQKAAGSEPPSGKGKAKSKASAQKTPKDLAA). Positions 204-226 (QKAAGSEPPSGKGKAKSKASAQK) are enriched in low complexity.

The protein belongs to the GSTCD family.

The protein localises to the cytoplasm. The polypeptide is Glutathione S-transferase C-terminal domain-containing protein (Gstcd) (Mus musculus (Mouse)).